The sequence spans 393 residues: DNA/RNA-binding protein KIN17 (393 aa).

The segment at 28–50 (CQMCQKQCRDENGFKCHCMSESH) adopts a C2H2-type zinc-finger fold. Residues 51–160 (QRQLLLASEN…RQLELEKKKK (110 aa)) are winged helix-turn-helix (wHTH). Lysine 135 is modified (N6,N6,N6-trimethyllysine; by METTL22; in vitro). N6-methyllysine is present on lysine 135. Residues 147–180 (ETIRRQLELEKKKKQDLDDEEKTAKFIEEQVRRG) adopt a coiled-coil conformation. The segment covering 209 to 224 (KGACSSSGATSSKSST) has biased composition (low complexity). The segment at 209–260 (KGACSSSGATSSKSSTLGPSALKTIGSSASVKRKESSQSSTQSKEKKKKKSA) is disordered. The stretch at 250-277 (QSKEKKKKKSALDEIMEIEEEKKRTART) forms a coiled coil. Residues 284–334 (EIIVKIITKKLGEKYHKKKAIVKEVIDKYTAVVKMIDSGDKLKLDQTHLET) are C-terminal subdomain A. The interval 340 to 391 (GKRILVLNGGYRGNEGTLESINEKTFSATIVIETGPLKGRRVEGIQYEDISK) is C-terminal subdomain B.

It belongs to the KIN17 family. As to quaternary structure, associated with DNA polymerase alpha, RFC1 and cyclin A, in multiprotein DNA replication complexes. Also associates with replication origins at the G1/S phase boundary and throughout the S phase in vivo. (Microbial infection) Interacts with SV40 large T antigen. As to expression, ubiquitously expressed in all tissues examined, with highest levels in skeletal muscle, heart and testis. Differentially expressed in non-tumorigenic and tumorigenic cell lines. Highly expressed in proliferating epithelial keratinocyte cells in vitro (at protein level).

The protein resides in the nucleus. It is found in the cytoplasm. Its function is as follows. Involved in DNA replication and the cellular response to DNA damage. May participate in DNA replication factories and create a bridge between DNA replication and repair mediated by high molecular weight complexes. May play a role in illegitimate recombination and regulation of gene expression. May participate in mRNA processing. Binds, in vitro, to double-stranded DNA. Also shown to bind preferentially to curved DNA in vitro and in vivo. Binds via its C-terminal domain to RNA in vitro. The polypeptide is DNA/RNA-binding protein KIN17 (Homo sapiens (Human)).